Consider the following 417-residue polypeptide: Gamma-glutamyl phosphate reductase (417 aa).

This sequence belongs to the gamma-glutamyl phosphate reductase family.

Its subcellular location is the cytoplasm. It carries out the reaction L-glutamate 5-semialdehyde + phosphate + NADP(+) = L-glutamyl 5-phosphate + NADPH + H(+). It participates in amino-acid biosynthesis; L-proline biosynthesis; L-glutamate 5-semialdehyde from L-glutamate: step 2/2. In terms of biological role, catalyzes the NADPH-dependent reduction of L-glutamate 5-phosphate into L-glutamate 5-semialdehyde and phosphate. The product spontaneously undergoes cyclization to form 1-pyrroline-5-carboxylate. This chain is Gamma-glutamyl phosphate reductase, found in Sodalis glossinidius (strain morsitans).